Here is a 565-residue protein sequence, read N- to C-terminus: 2-isopropylmalate synthase (565 aa).

The Pyruvate carboxyltransferase domain occupies 37–312 (PRWCSVDLRD…DPMIDLSDID (276 aa)). Mg(2+) contacts are provided by aspartate 46, histidine 251, histidine 253, and asparagine 287. The segment at 446 to 565 (EGGDPAASLE…SAVNRASRES (120 aa)) is regulatory domain.

Belongs to the alpha-IPM synthase/homocitrate synthase family. LeuA type 2 subfamily. Homodimer. Mg(2+) serves as cofactor.

Its subcellular location is the cytoplasm. It carries out the reaction 3-methyl-2-oxobutanoate + acetyl-CoA + H2O = (2S)-2-isopropylmalate + CoA + H(+). The protein operates within amino-acid biosynthesis; L-leucine biosynthesis; L-leucine from 3-methyl-2-oxobutanoate: step 1/4. Its function is as follows. Catalyzes the condensation of the acetyl group of acetyl-CoA with 3-methyl-2-oxobutanoate (2-ketoisovalerate) to form 3-carboxy-3-hydroxy-4-methylpentanoate (2-isopropylmalate). The chain is 2-isopropylmalate synthase from Parafrankia sp. (strain EAN1pec).